The sequence spans 1052 residues: Guanine nucleotide exchange factor subunit ric1 (1052 aa).

A Phosphotyrosine modification is found at tyrosine 293. A helical membrane pass occupies residues aspartate 661–leucine 681.

Belongs to the RIC1 family. Component of a guanine nucleotide exchange factor (GEF) complex.

The protein resides in the golgi apparatus membrane. Functionally, probable component of a guanine nucleotide exchange factor (GEF) that may be required for efficient fusion of endosome-derived vesicles with the Golgi. This chain is Guanine nucleotide exchange factor subunit ric1 (ric1), found in Schizosaccharomyces pombe (strain 972 / ATCC 24843) (Fission yeast).